Reading from the N-terminus, the 242-residue chain is MAETNSPRYSRILLKLSGEALSGNKDMGIDAQVLDQMSLSIAHLVGLGVQVGIVVGGGNLYRGSQLQKDGLVGRVTGDQMGMLATVMNGLAMRDALVRRNIKTRLMSALSIGTVVEPYSSRDAIRYLSQGEVCVFVAGTGNPFFTTDTAACLRGIEIEANLILKATKVDGVYNKDPSKYDDAVKYDNLTFDQVLDEKLGVMDLTAICLCRDHNVPLQVFDMNKPGALLSVIMGEKEGTHVTK.

Position 15 to 18 (15 to 18 (KLSG)) interacts with ATP. Glycine 57 is a binding site for UMP. Positions 58 and 62 each coordinate ATP. UMP-binding positions include aspartate 78 and 139-146 (TGNPFFTT). Residues threonine 166, tyrosine 172, and aspartate 175 each contribute to the ATP site.

Belongs to the UMP kinase family. As to quaternary structure, homohexamer.

Its subcellular location is the cytoplasm. The catalysed reaction is UMP + ATP = UDP + ADP. The protein operates within pyrimidine metabolism; CTP biosynthesis via de novo pathway; UDP from UMP (UMPK route): step 1/1. With respect to regulation, inhibited by UTP. In terms of biological role, catalyzes the reversible phosphorylation of UMP to UDP. The sequence is that of Uridylate kinase from Acinetobacter baylyi (strain ATCC 33305 / BD413 / ADP1).